A 425-amino-acid polypeptide reads, in one-letter code: Enolase (425 aa).

Gln-163 is a binding site for (2R)-2-phosphoglycerate. The Proton donor role is filled by Glu-205. Mg(2+) is bound by residues Asp-242, Glu-285, and Asp-312. (2R)-2-phosphoglycerate-binding residues include Lys-337, Arg-366, Ser-367, and Lys-388. The active-site Proton acceptor is Lys-337.

Belongs to the enolase family. Requires Mg(2+) as cofactor.

The protein localises to the cytoplasm. It is found in the secreted. It localises to the cell surface. The catalysed reaction is (2R)-2-phosphoglycerate = phosphoenolpyruvate + H2O. It functions in the pathway carbohydrate degradation; glycolysis; pyruvate from D-glyceraldehyde 3-phosphate: step 4/5. Its function is as follows. Catalyzes the reversible conversion of 2-phosphoglycerate (2-PG) into phosphoenolpyruvate (PEP). It is essential for the degradation of carbohydrates via glycolysis. The protein is Enolase of Granulibacter bethesdensis (strain ATCC BAA-1260 / CGDNIH1).